A 274-amino-acid chain; its full sequence is NH(3)-dependent NAD(+) synthetase (274 aa).

46–53 (GISGGQDS) contacts ATP. Asp52 serves as a coordination point for Mg(2+). Arg140 is a binding site for deamido-NAD(+). Thr160 contacts ATP. Glu165 lines the Mg(2+) pocket. Residues Lys173 and Asp180 each coordinate deamido-NAD(+). The ATP site is built by Lys189 and Thr211. Residue 260-261 (HK) coordinates deamido-NAD(+).

The protein belongs to the NAD synthetase family. As to quaternary structure, homodimer.

It catalyses the reaction deamido-NAD(+) + NH4(+) + ATP = AMP + diphosphate + NAD(+) + H(+). Its pathway is cofactor biosynthesis; NAD(+) biosynthesis; NAD(+) from deamido-NAD(+) (ammonia route): step 1/1. Its function is as follows. Catalyzes the ATP-dependent amidation of deamido-NAD to form NAD. Uses ammonia as a nitrogen source. This is NH(3)-dependent NAD(+) synthetase from Lactococcus lactis subsp. lactis (strain IL1403) (Streptococcus lactis).